We begin with the raw amino-acid sequence, 382 residues long: Queuine tRNA-ribosyltransferase (382 aa).

Aspartate 94 (proton acceptor) is an active-site residue. Residues 94–98, aspartate 148, glutamine 192, and glycine 219 contribute to the substrate site; that span reads DSGGF. The RNA binding stretch occupies residues 250 to 256; it reads GVGKPED. Aspartate 269 functions as the Nucleophile in the catalytic mechanism. The RNA binding; important for wobble base 34 recognition stretch occupies residues 274 to 278; sequence TRNAR. 4 residues coordinate Zn(2+): cysteine 307, cysteine 309, cysteine 312, and histidine 338.

This sequence belongs to the queuine tRNA-ribosyltransferase family. In terms of assembly, homodimer. Within each dimer, one monomer is responsible for RNA recognition and catalysis, while the other monomer binds to the replacement base PreQ1. Zn(2+) is required as a cofactor.

It carries out the reaction 7-aminomethyl-7-carbaguanine + guanosine(34) in tRNA = 7-aminomethyl-7-carbaguanosine(34) in tRNA + guanine. It participates in tRNA modification; tRNA-queuosine biosynthesis. In terms of biological role, catalyzes the base-exchange of a guanine (G) residue with the queuine precursor 7-aminomethyl-7-deazaguanine (PreQ1) at position 34 (anticodon wobble position) in tRNAs with GU(N) anticodons (tRNA-Asp, -Asn, -His and -Tyr). Catalysis occurs through a double-displacement mechanism. The nucleophile active site attacks the C1' of nucleotide 34 to detach the guanine base from the RNA, forming a covalent enzyme-RNA intermediate. The proton acceptor active site deprotonates the incoming PreQ1, allowing a nucleophilic attack on the C1' of the ribose to form the product. After dissociation, two additional enzymatic reactions on the tRNA convert PreQ1 to queuine (Q), resulting in the hypermodified nucleoside queuosine (7-(((4,5-cis-dihydroxy-2-cyclopenten-1-yl)amino)methyl)-7-deazaguanosine). This is Queuine tRNA-ribosyltransferase from Haemophilus ducreyi (strain 35000HP / ATCC 700724).